Consider the following 870-residue polypeptide: Valine--tRNA ligase (870 aa).

The short motif at 42–52 (PNVTGVLHIGH) is the 'HIGH' region element. Residues 527–531 (KMSKS) carry the 'KMSKS' region motif. Lys530 is a binding site for ATP. A coiled-coil region spans residues 800 to 870 (LENVDLSGIL…ISVELQNLRG (71 aa)).

It belongs to the class-I aminoacyl-tRNA synthetase family. ValS type 1 subfamily. As to quaternary structure, monomer.

Its subcellular location is the cytoplasm. The enzyme catalyses tRNA(Val) + L-valine + ATP = L-valyl-tRNA(Val) + AMP + diphosphate. Its function is as follows. Catalyzes the attachment of valine to tRNA(Val). As ValRS can inadvertently accommodate and process structurally similar amino acids such as threonine, to avoid such errors, it has a 'posttransfer' editing activity that hydrolyzes mischarged Thr-tRNA(Val) in a tRNA-dependent manner. The polypeptide is Valine--tRNA ligase (Campylobacter jejuni subsp. jejuni serotype O:2 (strain ATCC 700819 / NCTC 11168)).